The following is a 216-amino-acid chain: MGQKINPLGFRLGTTQSHDSIWFAQPTKYSENIQEDKKIRDWIKNYIQKNRRISSGVEGIGEIKIQKRIDLIQVIIYMGFPKLLIEGKPQKIEELQTNMHKKLNCVNRKLNIAIVKVTNAYKHPNILAEFIAGQLKNRVSFRKAMKKAIELTEQAGTKGVQVQIAGRIDGKEIARVEWIREGRVPLQTIRAKIEYCCYTVRTIYGVLGIKVWIFSK.

The 76-residue stretch at 43–118 folds into the KH type-2 domain; it reads IKNYIQKNRR…KLNIAIVKVT (76 aa).

It belongs to the universal ribosomal protein uS3 family. As to quaternary structure, part of the 30S ribosomal subunit.

The protein resides in the plastid. Its subcellular location is the chloroplast. This chain is Small ribosomal subunit protein uS3c (rps3), found in Phaseolus angularis (Azuki bean).